Here is a 266-residue protein sequence, read N- to C-terminus: Signal peptidase I (266 aa).

The Cytoplasmic segment spans residues 1–20; that stretch reads MQTDNTKSNTNKTAKQEWGS. A helical transmembrane segment spans residues 21–41; the sequence is FAFVICIALLIRILIMEPFTV. Residues 42-266 are Periplasmic-facing; it reads PTGSMKATIL…IFRNLYSTDE (225 aa). Catalysis depends on residues Ser-45 and Lys-108.

It belongs to the peptidase S26 family.

It is found in the cell inner membrane. It catalyses the reaction Cleavage of hydrophobic, N-terminal signal or leader sequences from secreted and periplasmic proteins.. The sequence is that of Signal peptidase I (lepB) from Rickettsia felis (strain ATCC VR-1525 / URRWXCal2) (Rickettsia azadi).